Here is an 815-residue protein sequence, read N- to C-terminus: Bifunctional purine biosynthetic protein purD (815 aa).

The tract at residues 6-452 (NILVIGSGSR…YRKDIGQKAL (447 aa)) is GARS. An ATP-grasp domain is found at 113 to 343 (KDFMARNNIP…LFEIVLACIE (231 aa)). 139-200 (IESLNYKIVL…EEFLDGEECS (62 aa)) contacts ATP. E313 and N315 together coordinate Mg(2+). Residues 469-801 (VSYSESGVDI…KVYKIGKIIN (333 aa)) are AIRS.

It in the N-terminal section; belongs to the GARS family. In the C-terminal section; belongs to the AIR synthase family. The cofactor is Mg(2+). It depends on Mn(2+) as a cofactor.

It localises to the cytoplasm. Its subcellular location is the cytosol. The enzyme catalyses 5-phospho-beta-D-ribosylamine + glycine + ATP = N(1)-(5-phospho-beta-D-ribosyl)glycinamide + ADP + phosphate + H(+). It catalyses the reaction 2-formamido-N(1)-(5-O-phospho-beta-D-ribosyl)acetamidine + ATP = 5-amino-1-(5-phospho-beta-D-ribosyl)imidazole + ADP + phosphate + H(+). It functions in the pathway purine metabolism; IMP biosynthesis via de novo pathway; 5-amino-1-(5-phospho-D-ribosyl)imidazole from N(2)-formyl-N(1)-(5-phospho-D-ribosyl)glycinamide: step 2/2. The protein operates within purine metabolism; IMP biosynthesis via de novo pathway; N(1)-(5-phospho-D-ribosyl)glycinamide from 5-phospho-alpha-D-ribose 1-diphosphate: step 2/2. Functionally, catalyzes the second and fifth step in the 'de novo' purine biosynthesis pathway; contains phosphoribosylamine--glycine ligase (GARS) and phosphoribosylformylglycinamidine cyclo-ligase (AIRS) activities. The protein is Bifunctional purine biosynthetic protein purD (purD) of Dictyostelium discoideum (Social amoeba).